Reading from the N-terminus, the 583-residue chain is Aspartate--tRNA ligase (583 aa).

Glu169 contacts L-aspartate. Positions 193 to 196 (QLFK) are aspartate. Arg215 lines the L-aspartate pocket. ATP contacts are provided by residues 215–217 (RDE) and Gln224. His443 lines the L-aspartate pocket. Glu477 contacts ATP. Arg484 lines the L-aspartate pocket. ATP is bound at residue 529 to 532 (GIDR).

This sequence belongs to the class-II aminoacyl-tRNA synthetase family. Type 1 subfamily. In terms of assembly, homodimer.

It is found in the cytoplasm. The catalysed reaction is tRNA(Asp) + L-aspartate + ATP = L-aspartyl-tRNA(Asp) + AMP + diphosphate. Its function is as follows. Catalyzes the attachment of L-aspartate to tRNA(Asp) in a two-step reaction: L-aspartate is first activated by ATP to form Asp-AMP and then transferred to the acceptor end of tRNA(Asp). The sequence is that of Aspartate--tRNA ligase from Stenotrophomonas maltophilia (strain R551-3).